We begin with the raw amino-acid sequence, 388 residues long: Succinate--CoA ligase [ADP-forming] subunit beta (388 aa).

In terms of domain architecture, ATP-grasp spans 9–244; that stretch reads KQLFREYGLP…TTQDDEREMH (236 aa). Residues K46, 53-55, E99, S102, and E107 each bind ATP; that span reads GRG. Mg(2+) is bound by residues N199 and D213. Residues N264 and 321–323 each bind substrate; that span reads GIV.

It belongs to the succinate/malate CoA ligase beta subunit family. As to quaternary structure, heterotetramer of two alpha and two beta subunits. Requires Mg(2+) as cofactor.

The enzyme catalyses succinate + ATP + CoA = succinyl-CoA + ADP + phosphate. It carries out the reaction GTP + succinate + CoA = succinyl-CoA + GDP + phosphate. Its pathway is carbohydrate metabolism; tricarboxylic acid cycle; succinate from succinyl-CoA (ligase route): step 1/1. In terms of biological role, succinyl-CoA synthetase functions in the citric acid cycle (TCA), coupling the hydrolysis of succinyl-CoA to the synthesis of either ATP or GTP and thus represents the only step of substrate-level phosphorylation in the TCA. The beta subunit provides nucleotide specificity of the enzyme and binds the substrate succinate, while the binding sites for coenzyme A and phosphate are found in the alpha subunit. The sequence is that of Succinate--CoA ligase [ADP-forming] subunit beta from Psychromonas ingrahamii (strain DSM 17664 / CCUG 51855 / 37).